Reading from the N-terminus, the 159-residue chain is MNISIISVGKIKEKFLKAAIDEYSKRLSKYCKLNIIEVADEKTPDNASLKEENIIKEKEGNLILKHIKDNSFVIALDLKGKSITSEEFSDLIENCRLTGNSTIAFVIGGSLGLSQQVLSRANYKLSFSKMTFPHQLFRVMLLEQVYRAFRILCREPYHK.

Residues L76, G108, and 127–132 (FSKMTF) contribute to the S-adenosyl-L-methionine site.

This sequence belongs to the RNA methyltransferase RlmH family. As to quaternary structure, homodimer.

Its subcellular location is the cytoplasm. The catalysed reaction is pseudouridine(1915) in 23S rRNA + S-adenosyl-L-methionine = N(3)-methylpseudouridine(1915) in 23S rRNA + S-adenosyl-L-homocysteine + H(+). Specifically methylates the pseudouridine at position 1915 (m3Psi1915) in 23S rRNA. The chain is Ribosomal RNA large subunit methyltransferase H from Clostridium botulinum (strain ATCC 19397 / Type A).